Consider the following 133-residue polypeptide: Small ribosomal subunit protein uS11 (133 aa).

Belongs to the universal ribosomal protein uS11 family. As to quaternary structure, part of the 30S ribosomal subunit.

Located on the platform of the 30S subunit. This is Small ribosomal subunit protein uS11 from Hyperthermus butylicus (strain DSM 5456 / JCM 9403 / PLM1-5).